The following is a 328-amino-acid chain: tRNA uridine(34) hydroxylase (328 aa).

The Rhodanese domain occupies 130 to 224 (LDKDTVVLDT…YGKDPEVQGE (95 aa)). Residue Cys184 is the Cysteine persulfide intermediate of the active site.

Belongs to the TrhO family.

It catalyses the reaction uridine(34) in tRNA + AH2 + O2 = 5-hydroxyuridine(34) in tRNA + A + H2O. Catalyzes oxygen-dependent 5-hydroxyuridine (ho5U) modification at position 34 in tRNAs. The chain is tRNA uridine(34) hydroxylase from Streptococcus pneumoniae (strain ATCC 700669 / Spain 23F-1).